Here is a 1238-residue protein sequence, read N- to C-terminus: MVRPVQVGNKTRMSFAKIDEVLQMPDLIEVQKKSYKWFLEEGLREVFREISPIESFTGNLALEFVDYRLENNPKYSVEECKDRDTTYAVPMKVKVRLTNRETGEIKESEVFMGDFPLMTEKGTFIINGAERVIVSQLVRSPGVYYEQQFDKFGKKLISATVIPNRGAWLEYEEDSNDIVYVRIDRTRKVPITVLLRALGYSTDIQILDLLGEEEKLKATLDKDTTKSEEEALIEIYKRLRPGEPPTVESAKSLLYALFFDAKRYDLAKVGRYKFNKKLALKARIANLKSAKKIVNPVTGEILVEEGEKISKEKAEEIQNCGINVVEVLVEGKVVKVIGNNTVDINKYPMPYDVSSLNIKEAVNLSILKEILDNFSDEEAVINEIKNRMDELVPKHITKDDIIATISYQLNLTHGIGSIDDIDHLGNRRLRSVGELLQNQFRIGLARLERVVKERMTIQDVNEITPQNLINIRPVVAAIREFFGSSQLSQFMDQTNPLAELTHKRRVSALGPGGLSRERAGFEVRDVHYSHYGRICPIETPEGPNIGLIGSLTTYARVNEYGFIEAPYRRVDKTTGTVTDEIVYMTADEEDEYIIAQANEPLDENNRFINEKVVCRLKEEIIAVPPTEVDFMDVSPKQIVSVATSMIPFLENDDANRALMGSNMQRQAVPLIKPEAPIIGTGIEYKAAVDSGVVVLAKNDGVVEKVAADKVVIRTKDGRRDEYNLLKFKRSNQGTCINQRPIVNEGDEVKKGQVICDGPSTDHGELALGKNVLVGFMLWEGYNYEDAILISEELVRDDSLTSIHIEEYDAEARDTKLGPEEITREIPNVGEDALKDLDERGIIRIGAEVTAGDILVGKVTPKGETELTAEERLLRAIFGEKAREVRDTSLRVPHGESGIVVDVKVYSRENGDELPPGVNQMVRVFVAQKRKISVGDKMAGRHGNKGVISRILPVEDMPFLPDGTPLQICLNPLGVPSRMNIGQVLEVHLGLVAKALGWQIATPVFDGATEEDIQELLAKSGFSPDGKVQLYDGRTGEPFDNKVTVGYMYMLKLHHLVDDKMHARSTGPYSLVTQQPLGGKAQFGGQRFGEMEVWALEAYGAAHTLQEILTVKSDDVSGRVKTYEAIVKGENIPEPGIPESFKVLVKELQSLALDVKVITEDNQEIPLKEFEDDDDSDVPDATLNINIEGREDTPPEEVYEEGYEEGFEEESEELPEDIDFEPDSFDIENDDLDLEDFDI.

The disordered stretch occupies residues 1186–1238 (IEGREDTPPEEVYEEGYEEGFEEESEELPEDIDFEPDSFDIENDDLDLEDFDI). Positions 1193 to 1238 (PPEEVYEEGYEEGFEEESEELPEDIDFEPDSFDIENDDLDLEDFDI) are enriched in acidic residues.

It belongs to the RNA polymerase beta chain family. In terms of assembly, the RNAP catalytic core consists of 2 alpha, 1 beta, 1 beta' and 1 omega subunit. When a sigma factor is associated with the core the holoenzyme is formed, which can initiate transcription.

The enzyme catalyses RNA(n) + a ribonucleoside 5'-triphosphate = RNA(n+1) + diphosphate. Functionally, DNA-dependent RNA polymerase catalyzes the transcription of DNA into RNA using the four ribonucleoside triphosphates as substrates. The protein is DNA-directed RNA polymerase subunit beta of Thermoanaerobacter sp. (strain X514).